Consider the following 343-residue polypeptide: Phosphoribosylformylglycinamidine cyclo-ligase (343 aa).

It belongs to the AIR synthase family.

The protein resides in the cytoplasm. It catalyses the reaction 2-formamido-N(1)-(5-O-phospho-beta-D-ribosyl)acetamidine + ATP = 5-amino-1-(5-phospho-beta-D-ribosyl)imidazole + ADP + phosphate + H(+). The protein operates within purine metabolism; IMP biosynthesis via de novo pathway; 5-amino-1-(5-phospho-D-ribosyl)imidazole from N(2)-formyl-N(1)-(5-phospho-D-ribosyl)glycinamide: step 2/2. The polypeptide is Phosphoribosylformylglycinamidine cyclo-ligase (Enterococcus faecalis (strain ATCC 700802 / V583)).